A 207-amino-acid chain; its full sequence is Urease accessory protein UreG (207 aa).

Gly-12–Thr-19 contacts GTP.

The protein belongs to the SIMIBI class G3E GTPase family. UreG subfamily. Homodimer. UreD, UreF and UreG form a complex that acts as a GTP-hydrolysis-dependent molecular chaperone, activating the urease apoprotein by helping to assemble the nickel containing metallocenter of UreC. The UreE protein probably delivers the nickel.

Its subcellular location is the cytoplasm. In terms of biological role, facilitates the functional incorporation of the urease nickel metallocenter. This process requires GTP hydrolysis, probably effectuated by UreG. In Cereibacter sphaeroides (strain ATCC 17025 / ATH 2.4.3) (Rhodobacter sphaeroides), this protein is Urease accessory protein UreG.